The chain runs to 427 residues: Histidine--tRNA ligase (427 aa).

The protein belongs to the class-II aminoacyl-tRNA synthetase family. In terms of assembly, homodimer.

Its subcellular location is the cytoplasm. The enzyme catalyses tRNA(His) + L-histidine + ATP = L-histidyl-tRNA(His) + AMP + diphosphate + H(+). The polypeptide is Histidine--tRNA ligase (Chloroherpeton thalassium (strain ATCC 35110 / GB-78)).